A 217-amino-acid chain; its full sequence is Cytidylate kinase (217 aa).

11-19 (GPAGAGKST) is a binding site for ATP.

It belongs to the cytidylate kinase family. Type 1 subfamily.

Its subcellular location is the cytoplasm. The enzyme catalyses CMP + ATP = CDP + ADP. The catalysed reaction is dCMP + ATP = dCDP + ADP. This is Cytidylate kinase from Clostridium perfringens (strain SM101 / Type A).